Consider the following 474-residue polypeptide: Vitamin D-binding protein (474 aa).

A signal peptide spans 1–16 (MKRILVFLLAVAFVHA). Albumin domains lie at 17-208 (LERG…QLKH), 209-393 (FSLL…QLTR), and 394-474 (ELSS…TLQS). 2 cysteine pairs are disulfide-bonded: Cys29–Cys75 and Cys74–Cys83. Residue Asn86 is glycosylated (N-linked (GlcNAc...) asparagine). 12 disulfide bridges follow: Cys96/Cys112, Cys111/Cys122, Cys145/Cys190, Cys189/Cys198, Cys220/Cys266, Cys265/Cys273, Cys285/Cys299, Cys298/Cys310, Cys334/Cys375, Cys374/Cys383, Cys406/Cys452, and Cys451/Cys461. N-linked (GlcNAc...) asparagine glycosylation is present at Asn287.

The protein belongs to the ALB/AFP/VDB family. Associates with membrane-bound immunoglobulin on the surface of B-lymphocytes and with IgG Fc receptor on the membranes of T-lymphocytes. Interacts with LRP2; the interaction is required for renal uptake of GC in complex with 25-hydroxyvitamin D3.

The protein localises to the secreted. In terms of biological role, involved in vitamin D transport and storage, scavenging of extracellular G-actin, enhancement of the chemotactic activity of C5 alpha for neutrophils in inflammation and macrophage activation. This is Vitamin D-binding protein (GC) from Bos taurus (Bovine).